Consider the following 183-residue polypeptide: Thioredoxin-like protein CITRX, chloroplastic (183 aa).

The N-terminal 81 residues, 1 to 81, are a transit peptide targeting the chloroplast; that stretch reads MALVQSRTFP…REDYLVKKLS (81 aa). In terms of domain architecture, Thioredoxin spans 82-183; the sequence is AQELQELVKG…MMHDIIDNEM (102 aa). Catalysis depends on nucleophile residues Cys106 and Cys109. An intrachain disulfide couples Cys106 to Cys109.

Belongs to the thioredoxin family. Plant CITRX-type subfamily. In terms of assembly, interacts with FLN1 and FLN2. Interacts with MRL7.

Its subcellular location is the plastid. The protein localises to the chloroplast. Its function is as follows. Thiol-disulfide oxidoreductase that plays a role in proper chloroplast development, most likely through regulating plastid-encoded polymerase (PEP) dependent chloroplast transcription. Acts as a component of the transcriptionally active plastid chromosome that is required for plastid gene expression. The protein is Thioredoxin-like protein CITRX, chloroplastic of Arabidopsis thaliana (Mouse-ear cress).